The chain runs to 188 residues: dCTP deaminase (188 aa).

Residues 111-116 (KSTYAR), 135-137 (TLE), Gln-156, Tyr-170, Lys-179, and Gln-180 each bind dCTP. Glu-137 serves as the catalytic Proton donor/acceptor.

The protein belongs to the dCTP deaminase family. In terms of assembly, homotrimer.

The enzyme catalyses dCTP + H2O + H(+) = dUTP + NH4(+). Its pathway is pyrimidine metabolism; dUMP biosynthesis; dUMP from dCTP (dUTP route): step 1/2. In terms of biological role, catalyzes the deamination of dCTP to dUTP. The polypeptide is dCTP deaminase (Orientia tsutsugamushi (strain Ikeda) (Rickettsia tsutsugamushi)).